Consider the following 430-residue polypeptide: Gamma-glutamyl phosphate reductase (430 aa).

This sequence belongs to the gamma-glutamyl phosphate reductase family.

The protein resides in the cytoplasm. It catalyses the reaction L-glutamate 5-semialdehyde + phosphate + NADP(+) = L-glutamyl 5-phosphate + NADPH + H(+). It participates in amino-acid biosynthesis; L-proline biosynthesis; L-glutamate 5-semialdehyde from L-glutamate: step 2/2. In terms of biological role, catalyzes the NADPH-dependent reduction of L-glutamate 5-phosphate into L-glutamate 5-semialdehyde and phosphate. The product spontaneously undergoes cyclization to form 1-pyrroline-5-carboxylate. The chain is Gamma-glutamyl phosphate reductase from Rhodopseudomonas palustris (strain HaA2).